A 184-amino-acid chain; its full sequence is Uroplakin-2 (184 aa).

An N-terminal signal peptide occupies residues 1–25 (MASTLPVQTLPLILILLAVLAPGTA). Positions 26-84 (DFNISSLSGLLSPALTESLLIALPPCHLTGGNATLMVRRANDSKVVKSDFVVPPCRGRR) are excised as a propeptide. Residues Asn-28, Asn-57, and Asn-66 are each glycosylated (N-linked (GlcNAc...) asparagine). At 85 to 155 (ELVSVVDSGS…IGLGMARTGG (71 aa)) the chain is on the lumenal side. A helical membrane pass occupies residues 156 to 180 (MVVITVLLSVAMFLLVVGLIVALHW). At 181–184 (DARK) the chain is on the cytoplasmic side.

This sequence belongs to the uroplakin-2 family. In terms of assembly, interacts with uroplakin-1a (UPK1A).

The protein localises to the cell membrane. In terms of biological role, component of the asymmetric unit membrane (AUM); a highly specialized biomembrane elaborated by terminally differentiated urothelial cells. May play an important role in regulating the assembly of the AUM. In Mus musculus (Mouse), this protein is Uroplakin-2 (Upk2).